Here is a 426-residue protein sequence, read N- to C-terminus: MDTIEIPALNRPVDATVEIPGSKSLTNRALLVAALAQGDSILENALFSEDSEYFAKCLEQLGIPITLNPHLAQIQLAGRGGEIPAKQADLFVGLSGTTARFISALVALGNGEYRLDGVPRMRERPMGDMLTVLETGGATVNFEGNSGFMPYTVYSQGFAGGNFCLKANQTSQQLSALLMIAPYAQQDTIFEVEGTLVSLSYIKMTCRLMADFGVEVIQIGDNQFQIKAGQRYQAQHYTVEPDASNASYFFAAAAVTGGRVRVKHLTKQSCQGDILWLNVLEQMGCQIKDSDDYTEVTGPKQLQGIDIDMNDISDLVQTLAAIAPFASSPITIRNVEHIRYKETDRIKAVVTELRRLGVQVEEFPDRLKIEPGPITPAEIETYHDHRMAMAFAVTGLKVPGIVIKDPGCTAKTFPDYFTRFFQMLEQ.

3-phosphoshikimate-binding residues include Lys23, Ser24, and Arg28. Residue Lys23 participates in phosphoenolpyruvate binding. Phosphoenolpyruvate-binding residues include Gly96 and Arg124. The 3-phosphoshikimate site is built by Thr170, Ser171, Gln172, Ser198, Asp314, and Lys341. Residue Gln172 participates in phosphoenolpyruvate binding. The active-site Proton acceptor is Asp314. The phosphoenolpyruvate site is built by Arg345, Arg386, and Lys411.

This sequence belongs to the EPSP synthase family. In terms of assembly, monomer.

It is found in the cytoplasm. It carries out the reaction 3-phosphoshikimate + phosphoenolpyruvate = 5-O-(1-carboxyvinyl)-3-phosphoshikimate + phosphate. It functions in the pathway metabolic intermediate biosynthesis; chorismate biosynthesis; chorismate from D-erythrose 4-phosphate and phosphoenolpyruvate: step 6/7. Catalyzes the transfer of the enolpyruvyl moiety of phosphoenolpyruvate (PEP) to the 5-hydroxyl of shikimate-3-phosphate (S3P) to produce enolpyruvyl shikimate-3-phosphate and inorganic phosphate. This Nostoc punctiforme (strain ATCC 29133 / PCC 73102) protein is 3-phosphoshikimate 1-carboxyvinyltransferase.